A 207-amino-acid polypeptide reads, in one-letter code: MKKTPRSTARELALLALSQLPKKSGSLEKKQLQEVVLAAVRTLRIEAQDILETAAAELQRGSDRLLNSQIDTTDIESARVMLYEAIELGQTAINRIGTAVELPEMLQLTNQLEVRSYAMEVLTKVNGNRKEVDKLLQESIVDWQIERLPRIDLDILRIAVAEMMFIGIQKQVAISEAVELAKRYSGEDGYKFINGVLRRVFDKINVI.

The protein belongs to the NusB family.

Its function is as follows. Involved in transcription antitermination. Required for transcription of ribosomal RNA (rRNA) genes. Binds specifically to the boxA antiterminator sequence of the ribosomal RNA (rrn) operons. The sequence is that of Transcription antitermination protein NusB from Trichodesmium erythraeum (strain IMS101).